The following is a 635-amino-acid chain: Threonine--tRNA ligase (635 aa).

The region spanning 1-58 is the TGS domain; that stretch reads MIHVTCNQEAFELPEGASAMDLANKMKQSHCFAGALINDQEKDLSTTLQDGDTVLFLT. The tract at residues 237–528 is catalytic; the sequence is DHRVLGTKLD…LIEHFKGRFP (292 aa). Residues cysteine 328, histidine 379, and histidine 505 each coordinate Zn(2+).

This sequence belongs to the class-II aminoacyl-tRNA synthetase family. In terms of assembly, homodimer. Zn(2+) serves as cofactor.

It localises to the cytoplasm. The catalysed reaction is tRNA(Thr) + L-threonine + ATP = L-threonyl-tRNA(Thr) + AMP + diphosphate + H(+). Its function is as follows. Catalyzes the attachment of threonine to tRNA(Thr) in a two-step reaction: L-threonine is first activated by ATP to form Thr-AMP and then transferred to the acceptor end of tRNA(Thr). Also edits incorrectly charged L-seryl-tRNA(Thr). The polypeptide is Threonine--tRNA ligase (Chlamydia trachomatis serovar A (strain ATCC VR-571B / DSM 19440 / HAR-13)).